Reading from the N-terminus, the 191-residue chain is MDDGLRDRPGVTSRFFHSLEVKYQYYLDRLTPHTAFRWVIALISLVFFASRIILLQGFYIVAYAVGIYYLNLFLLFLTPSIDPALEFEDEDDGPVLPSKTNDEFRPFMRRLPEFKFWHSFMKATLIAITCTFFEFFDVPVFWPILVMYFFILTFLTLKRQIMHMIKYRYIPFTVGKPRMAGKEDTGKVVVG.

3 helical membrane-spanning segments follow: residues 35–55 (AFRWVIALISLVFFASRIILL), 57–77 (GFYIVAYAVGIYYLNLFLLFL), and 135–155 (FFDVPVFWPILVMYFFILTFL).

Belongs to the RER1 family.

It is found in the membrane. Functionally, may be involved in protein transport along the secretory pathway. This is Protein RER1 homolog (rer-1) from Caenorhabditis elegans.